The sequence spans 317 residues: Porphobilinogen deaminase (317 aa).

S-(dipyrrolylmethanemethyl)cysteine is present on Cys245.

The protein belongs to the HMBS family. Monomer. Dipyrromethane serves as cofactor.

It carries out the reaction 4 porphobilinogen + H2O = hydroxymethylbilane + 4 NH4(+). It functions in the pathway porphyrin-containing compound metabolism; protoporphyrin-IX biosynthesis; coproporphyrinogen-III from 5-aminolevulinate: step 2/4. It participates in porphyrin-containing compound metabolism; chlorophyll biosynthesis. Functionally, tetrapolymerization of the monopyrrole PBG into the hydroxymethylbilane pre-uroporphyrinogen in several discrete steps. The sequence is that of Porphobilinogen deaminase from Synechococcus sp. (strain CC9605).